The primary structure comprises 185 residues: Peptidyl-tRNA hydrolase (185 aa).

A tRNA-binding site is contributed by Tyr14. Catalysis depends on His19, which acts as the Proton acceptor. TRNA-binding residues include Phe64, Asn66, and Asn112.

Belongs to the PTH family. In terms of assembly, monomer.

It is found in the cytoplasm. The catalysed reaction is an N-acyl-L-alpha-aminoacyl-tRNA + H2O = an N-acyl-L-amino acid + a tRNA + H(+). Functionally, hydrolyzes ribosome-free peptidyl-tRNAs (with 1 or more amino acids incorporated), which drop off the ribosome during protein synthesis, or as a result of ribosome stalling. Its function is as follows. Catalyzes the release of premature peptidyl moieties from peptidyl-tRNA molecules trapped in stalled 50S ribosomal subunits, and thus maintains levels of free tRNAs and 50S ribosomes. The polypeptide is Peptidyl-tRNA hydrolase (Latilactobacillus sakei subsp. sakei (strain 23K) (Lactobacillus sakei subsp. sakei)).